A 281-amino-acid chain; its full sequence is MTATRLDGKATRDEIFVELATRAAALKAAGKTPGLGTILVGDDPGSHAYVRGKHADCAKVGLNSIRRDLPADIDQATLCATIDELNANPDCTGYIVQLPLPKHLDENEALERIDPDKDADGLHPTNLGRLVLGKEAPLPCTPRGIVYLLRRYDVKLDGAHVVVIGRGVTVGRPLGLLLTRRSENATVTLCHTGTRDLAALTRQADIIVAAAGVPHMVTADMVKPGAAVVDVGVSRVDDKLTGDVAEDVWDVAGYVSPNPGGVGPLTRAFLLTNVIERAERS.

Residues G165–G167, T192, and V233 contribute to the NADP(+) site.

Belongs to the tetrahydrofolate dehydrogenase/cyclohydrolase family. As to quaternary structure, homodimer.

The catalysed reaction is (6R)-5,10-methylene-5,6,7,8-tetrahydrofolate + NADP(+) = (6R)-5,10-methenyltetrahydrofolate + NADPH. It carries out the reaction (6R)-5,10-methenyltetrahydrofolate + H2O = (6R)-10-formyltetrahydrofolate + H(+). Its pathway is one-carbon metabolism; tetrahydrofolate interconversion. Functionally, catalyzes the oxidation of 5,10-methylenetetrahydrofolate to 5,10-methenyltetrahydrofolate and then the hydrolysis of 5,10-methenyltetrahydrofolate to 10-formyltetrahydrofolate. This Mycobacteroides abscessus (strain ATCC 19977 / DSM 44196 / CCUG 20993 / CIP 104536 / JCM 13569 / NCTC 13031 / TMC 1543 / L948) (Mycobacterium abscessus) protein is Bifunctional protein FolD.